The sequence spans 420 residues: Tyrosine--tRNA ligase 2 (420 aa).

Position 36 (Tyr36) interacts with L-tyrosine. The short motif at 41–50 is the 'HIGH' region element; it reads PTADSLHIGH. The L-tyrosine site is built by Tyr171 and Gln175. The 'KMSKS' region motif lies at 231–235; that stretch reads KFGKT. ATP is bound at residue Lys234. In terms of domain architecture, S4 RNA-binding spans 354 to 420; sequence LSLVDLLVTS…GKKKYFLLKY (67 aa).

It belongs to the class-I aminoacyl-tRNA synthetase family. TyrS type 1 subfamily. In terms of assembly, homodimer.

It is found in the cytoplasm. It carries out the reaction tRNA(Tyr) + L-tyrosine + ATP = L-tyrosyl-tRNA(Tyr) + AMP + diphosphate + H(+). Catalyzes the attachment of tyrosine to tRNA(Tyr) in a two-step reaction: tyrosine is first activated by ATP to form Tyr-AMP and then transferred to the acceptor end of tRNA(Tyr). This is Tyrosine--tRNA ligase 2 from Enterococcus faecalis (strain ATCC 700802 / V583).